Here is a 168-residue protein sequence, read N- to C-terminus: uncharacterized protein (168 aa).

Disordered regions lie at residues 1–81 (MSSA…GRSW) and 119–150 (RDLS…STVA). The span at 7–34 (SRTSRSKATGASSSSISSSIRASPSSSS) shows a compositional bias: low complexity. The span at 43–67 (TRRRRRRTGRRSTKRSIISPRRRRM) shows a compositional bias: basic residues. Over residues 123-146 (ESASTGSENLSRKASNQSQSQGRL) the composition is skewed to polar residues.

This is an uncharacterized protein from Human adenovirus C serotype 2 (HAdV-2).